Reading from the N-terminus, the 359-residue chain is UDP-N-acetylglucosamine--N-acetylmuramyl-(pentapeptide) pyrophosphoryl-undecaprenol N-acetylglucosamine transferase (359 aa).

UDP-N-acetyl-alpha-D-glucosamine contacts are provided by residues 15–17 (TGG), Asn127, Arg166, Ser191, Ile245, 264–269 (ALTVSE), and Gln290.

It belongs to the glycosyltransferase 28 family. MurG subfamily.

Its subcellular location is the cell inner membrane. It catalyses the reaction di-trans,octa-cis-undecaprenyl diphospho-N-acetyl-alpha-D-muramoyl-L-alanyl-D-glutamyl-meso-2,6-diaminopimeloyl-D-alanyl-D-alanine + UDP-N-acetyl-alpha-D-glucosamine = di-trans,octa-cis-undecaprenyl diphospho-[N-acetyl-alpha-D-glucosaminyl-(1-&gt;4)]-N-acetyl-alpha-D-muramoyl-L-alanyl-D-glutamyl-meso-2,6-diaminopimeloyl-D-alanyl-D-alanine + UDP + H(+). It participates in cell wall biogenesis; peptidoglycan biosynthesis. Cell wall formation. Catalyzes the transfer of a GlcNAc subunit on undecaprenyl-pyrophosphoryl-MurNAc-pentapeptide (lipid intermediate I) to form undecaprenyl-pyrophosphoryl-MurNAc-(pentapeptide)GlcNAc (lipid intermediate II). In Pseudomonas entomophila (strain L48), this protein is UDP-N-acetylglucosamine--N-acetylmuramyl-(pentapeptide) pyrophosphoryl-undecaprenol N-acetylglucosamine transferase.